The following is a 482-amino-acid chain: tRNA sulfurtransferase (482 aa).

Residues 61–165 (LAIRDALTRI…DDRLLLIKGR (105 aa)) enclose the THUMP domain. ATP is bound by residues 183 to 184 (LI), lysine 265, glycine 287, and glutamine 296. Cysteines 344 and 456 form a disulfide. The 79-residue stretch at 404–482 (FGPNDVILDI…GFNNVKVYRL (79 aa)) folds into the Rhodanese domain. The active-site Cysteine persulfide intermediate is the cysteine 456.

The protein belongs to the ThiI family.

Its subcellular location is the cytoplasm. It carries out the reaction [ThiI sulfur-carrier protein]-S-sulfanyl-L-cysteine + a uridine in tRNA + 2 reduced [2Fe-2S]-[ferredoxin] + ATP + H(+) = [ThiI sulfur-carrier protein]-L-cysteine + a 4-thiouridine in tRNA + 2 oxidized [2Fe-2S]-[ferredoxin] + AMP + diphosphate. It catalyses the reaction [ThiS sulfur-carrier protein]-C-terminal Gly-Gly-AMP + S-sulfanyl-L-cysteinyl-[cysteine desulfurase] + AH2 = [ThiS sulfur-carrier protein]-C-terminal-Gly-aminoethanethioate + L-cysteinyl-[cysteine desulfurase] + A + AMP + 2 H(+). Its pathway is cofactor biosynthesis; thiamine diphosphate biosynthesis. Catalyzes the ATP-dependent transfer of a sulfur to tRNA to produce 4-thiouridine in position 8 of tRNAs, which functions as a near-UV photosensor. Also catalyzes the transfer of sulfur to the sulfur carrier protein ThiS, forming ThiS-thiocarboxylate. This is a step in the synthesis of thiazole, in the thiamine biosynthesis pathway. The sulfur is donated as persulfide by IscS. The chain is tRNA sulfurtransferase from Shigella boydii serotype 18 (strain CDC 3083-94 / BS512).